A 1157-amino-acid chain; its full sequence is Nitric oxide synthase, inducible (1157 aa).

The short motif at 23-27 (DINNN) is the DINNN-motif; mediates interaction with SPSB1, SPSB2 and SPSB4 element. The tract at residues 29–64 (EKLRQASSSPVTQDDPKCPSRSRHRNECSQPLAETA) is disordered. Zn(2+)-binding residues include Cys110 and Cys115. Cys200 contributes to the heme b binding site. Residues Gln263, Trp372, Tyr373, and Glu377 each contribute to the L-arginine site. Positions 381, 462, 463, and 476 each coordinate (6R)-L-erythro-5,6,7,8-tetrahydrobiopterin. Position 491 (Tyr491) interacts with heme b. Residues 515-535 (FKVLVKAVLFAAVLMHKTMAA) form a calmodulin-binding region. The Flavodoxin-like domain maps to 539-677 (ATILFATETG…AFRGWAVQTF (139 aa)). FMN contacts are provided by Thr545, Glu546, Thr547, Arg549, Ser550, Ser591, Thr592, Ser628, Cys635, Glu661, and Gln665. The region spanning 730 to 970 (KYVFSMRLKS…VRSASGFQLP (241 aa)) is the FAD-binding FR-type domain. Arg750 provides a ligand contact to NADP(+). Residues His772, Arg906, Tyr908, Ser909, Thr924, and Ala926 each contribute to the FAD site. Thr929 serves as a coordination point for NADP(+). Residues Tyr930, Val943, Cys944, and Ser945 each coordinate FAD. Residues Thr984, Arg1017, Ser1046, Arg1047, Lys1053, Tyr1055, Gln1057, and Asp1090 each coordinate NADP(+). Residues 1138-1157 (KEGAVGPPSDPRAPGAHGKS) form a disordered region.

It belongs to the NOS family. As to quaternary structure, homodimer. Interacts with NHERF1. Interacts with GAPDH; induced by oxidatively-modified low-densitity lipoprotein (LDL(ox)). Interacts with S100A8 and S100A9 to form the iNOS-S100A8/9 transnitrosylase complex. Interacts with SPSB1, SPSB2 and SPSB4. Interacts with ELOC and CUL5 in the presence of SPSB1 or SPSB2 or SPSB4. Forms a complex with ASL, ASS1 and HSP90AA1; the complex regulates cell-autonomous L-arginine synthesis and citrulline recycling while channeling extracellular L-arginine to nitric oxide synthesis pathway. The cofactor is heme b. FAD serves as cofactor. It depends on FMN as a cofactor. Requires (6R)-L-erythro-5,6,7,8-tetrahydrobiopterin as cofactor. In terms of processing, polyubiquitinated; mediated by SPSB1, SPSB2 and SPSB4, leading to proteasomal degradation. In terms of tissue distribution, detected in both stimulated and unstimulated immune cells and macrophages with little or no up-regulation following cellular stimulation with lipopolysaccharides (LPS) or concanavalin A (ConA).

Its subcellular location is the cytoplasm. The protein resides in the cytosol. It catalyses the reaction 2 L-arginine + 3 NADPH + 4 O2 + H(+) = 2 L-citrulline + 2 nitric oxide + 3 NADP(+) + 4 H2O. Its activity is regulated as follows. Not stimulated by calcium/calmodulin. Functionally, produces nitric oxide (NO) which is a messenger molecule with diverse functions throughout the body. In macrophages, NO mediates tumoricidal and bactericidal actions. Also has nitrosylase activity and mediates cysteine S-nitrosylation of cytoplasmic target proteins such PTGS2/COX2. As component of the iNOS-S100A8/9 transnitrosylase complex involved in the selective inflammatory stimulus-dependent S-nitrosylation of GAPDH implicated in regulation of the GAIT complex activity and probably multiple targets including ANXA5, EZR, MSN and VIM. Involved in inflammation, enhances the synthesis of pro-inflammatory mediators such as IL6 and IL8. In Sus scrofa (Pig), this protein is Nitric oxide synthase, inducible (NOS2).